The chain runs to 892 residues: MAQYDIRKQYLDFFASKSHKVYDSMPLVPDDASLLFTNAGMVQFKDIFTGKIPIPAPPRATSSQLCIRAGGKHNDLENVGYTARHHTLFEMLGNFSFGDYFKKEAIAYAWEFVTQVLGFSKDVLYVTIHESDDEAYELWCEHIEPSRIKRMGDKDNFWQMGDSGPCGPCSEIYVDQGEKYFQSDEDYFGGEGDRFLEIWNLVFMQFEQKGGVRTLLPKPSIDTGMGLERVIALKEGKINNFDTSLFAPLMQCLQKLTNKTYFGDDEIFDRLDLQEAEMIKIKNIQASFRVIADHARSVAFLLAQGVNFDKEGRGYVLRRILRRAVRHGYLLGLKKPFLWQVVEVVCESMGVHYSYLQERKRAIKEQCKNEEERFFETIESGMTLFSTELEKLQSAVQTQKQEILFSGEVAFKLYDTYGFPLDLTQDMLRERHIQVDMQAFEQCMNEQKSRSKASWKGSGDALKEGDFNALLSKFGENKFVGYESNKETCKIKALLDSQFKMVDTLSPSSQGWVMLDKTPFYPESGGPVGDKGALYSTNRILQSAQAQKFAQVLDTQKFFGLNLSQIEALSALKVGQEVFAEVDSIRFEIAKHHSATHLLHLALRTILGSHIAQAGSLVQPHRLRFDFSHPKALTNEEITHIENLVNEQILQSNAQLCENMDMQQAKAKGAMALFGEKYGERVRVVSFGDSIELCGGIHVNNTAEIGSFYIVKESGVSSGVRRIEAVCGNAAYHYGKNALLELSRARESLKAQDVLQGIEKIKMQLNEAKEKANKAKQSVKSLDYEEINGVRLIVLKLDSVSANEAKEIIDRSKNENESVAILLLSESNNKISIVAGVKNAPLKAGAWVKQVAQELGGNGGGRDDFATAGGKDIDKISQALNLAKDIATKALQ.

Histidine 593, histidine 597, cysteine 694, and histidine 698 together coordinate Zn(2+).

Belongs to the class-II aminoacyl-tRNA synthetase family. Requires Zn(2+) as cofactor.

The protein localises to the cytoplasm. The enzyme catalyses tRNA(Ala) + L-alanine + ATP = L-alanyl-tRNA(Ala) + AMP + diphosphate. Its function is as follows. Catalyzes the attachment of alanine to tRNA(Ala) in a two-step reaction: alanine is first activated by ATP to form Ala-AMP and then transferred to the acceptor end of tRNA(Ala). Also edits incorrectly charged Ser-tRNA(Ala) and Gly-tRNA(Ala) via its editing domain. This chain is Alanine--tRNA ligase, found in Helicobacter hepaticus (strain ATCC 51449 / 3B1).